The chain runs to 170 residues: Odorant-binding protein 2b (170 aa).

Residues 1 to 15 (MKTLFLGVTLGLAAA) form the signal peptide. C74 and C166 are joined by a disulfide.

The protein belongs to the calycin superfamily. Lipocalin family. In terms of tissue distribution, strongly expressed in genital sphere organs such as the prostate and mammary glands.

Its subcellular location is the secreted. Probably binds and transports small hydrophobic volatile molecules. The sequence is that of Odorant-binding protein 2b (OBP2B) from Homo sapiens (Human).